Reading from the N-terminus, the 183-residue chain is Crossover junction endodeoxyribonuclease RuvC (183 aa).

Catalysis depends on residues Asp7, Glu66, and Asp138. Mg(2+)-binding residues include Asp7, Glu66, and Asp138.

The protein belongs to the RuvC family. As to quaternary structure, homodimer which binds Holliday junction (HJ) DNA. The HJ becomes 2-fold symmetrical on binding to RuvC with unstacked arms; it has a different conformation from HJ DNA in complex with RuvA. In the full resolvosome a probable DNA-RuvA(4)-RuvB(12)-RuvC(2) complex forms which resolves the HJ. Mg(2+) is required as a cofactor.

It is found in the cytoplasm. It carries out the reaction Endonucleolytic cleavage at a junction such as a reciprocal single-stranded crossover between two homologous DNA duplexes (Holliday junction).. Functionally, the RuvA-RuvB-RuvC complex processes Holliday junction (HJ) DNA during genetic recombination and DNA repair. Endonuclease that resolves HJ intermediates. Cleaves cruciform DNA by making single-stranded nicks across the HJ at symmetrical positions within the homologous arms, yielding a 5'-phosphate and a 3'-hydroxyl group; requires a central core of homology in the junction. The consensus cleavage sequence is 5'-(A/T)TT(C/G)-3'. Cleavage occurs on the 3'-side of the TT dinucleotide at the point of strand exchange. HJ branch migration catalyzed by RuvA-RuvB allows RuvC to scan DNA until it finds its consensus sequence, where it cleaves and resolves the cruciform DNA. The polypeptide is Crossover junction endodeoxyribonuclease RuvC (Burkholderia ambifaria (strain MC40-6)).